We begin with the raw amino-acid sequence, 494 residues long: NADH-quinone oxidoreductase subunit N 2 (494 aa).

14 consecutive transmembrane segments (helical) span residues 14–34 (LPQI…GMLL), 45–65 (IAML…PLTA), 82–102 (VVQV…GSVL), 116–136 (IGEF…LVST), 139–159 (LLLI…LTAF), 174–194 (FLFG…LYGV), 214–234 (LLVA…AAPF), 262–282 (FFVF…NAAW), 289–309 (WMPI…LAAL), 317–337 (LLAY…IAHT), 344–364 (LLYY…VLAI), 388–408 (ACLL…GFFA), 422–442 (AFGL…ALFY), and 470–490 (ITLL…NLLM).

This sequence belongs to the complex I subunit 2 family. NDH-1 is composed of 14 different subunits. Subunits NuoA, H, J, K, L, M, N constitute the membrane sector of the complex.

It localises to the cell inner membrane. It carries out the reaction a quinone + NADH + 5 H(+)(in) = a quinol + NAD(+) + 4 H(+)(out). Functionally, NDH-1 shuttles electrons from NADH, via FMN and iron-sulfur (Fe-S) centers, to quinones in the respiratory chain. The immediate electron acceptor for the enzyme in this species is believed to be ubiquinone. Couples the redox reaction to proton translocation (for every two electrons transferred, four hydrogen ions are translocated across the cytoplasmic membrane), and thus conserves the redox energy in a proton gradient. The polypeptide is NADH-quinone oxidoreductase subunit N 2 (Acidobacterium capsulatum (strain ATCC 51196 / DSM 11244 / BCRC 80197 / JCM 7670 / NBRC 15755 / NCIMB 13165 / 161)).